The chain runs to 134 residues: UPF0412 protein YaaI (134 aa).

The first 23 residues, 1–23 (MRSVLTISASLLFGLALSSVAHA), serve as a signal peptide directing secretion.

The protein belongs to the UPF0412 family.

The sequence is that of UPF0412 protein YaaI from Salmonella choleraesuis (strain SC-B67).